Consider the following 292-residue polypeptide: Xyloglucan endotransglucosylase/hydrolase protein A (292 aa).

A signal peptide spans 1–20; that stretch reads MGSSLWTCLILLSLASASFA. The GH16 domain maps to 21-219; it reads ANPRTPIDVP…WSKAPFIASY (199 aa). The Nucleophile role is filled by glutamate 105. The active-site Proton donor is the glutamate 109. Glutamate 109 serves as a coordination point for xyloglucan. N-linked (GlcNAc...) asparagine glycosylation is present at asparagine 113. Residues 122 to 124, 132 to 134, 198 to 199, and glycine 203 each bind xyloglucan; these read QTN, DRE, and DW. 2 cysteine pairs are disulfide-bonded: cysteine 227–cysteine 236 and cysteine 273–cysteine 286. Arginine 278 lines the xyloglucan pocket.

It belongs to the glycosyl hydrolase 16 family. XTH group 1 subfamily. Contains at least one intrachain disulfide bond essential for its enzymatic activity. As to expression, predominantly expressed in the phloem fibers of growing internodes. Expressed in xylem cells in the basal part of the internode. In the internode, it is expressed closer to the top of the internode compared to XTHB.

Its subcellular location is the secreted. The protein localises to the cell wall. It localises to the extracellular space. It is found in the apoplast. It catalyses the reaction breaks a beta-(1-&gt;4) bond in the backbone of a xyloglucan and transfers the xyloglucanyl segment on to O-4 of the non-reducing terminal glucose residue of an acceptor, which can be a xyloglucan or an oligosaccharide of xyloglucan.. Functionally, catalyzes xyloglucan endohydrolysis (XEH) and/or endotransglycosylation (XET). Cleaves and religates xyloglucan polymers, an essential constituent of the primary cell wall, and thereby participates in cell wall construction of growing tissues. This is Xyloglucan endotransglucosylase/hydrolase protein A (XTHA) from Phaseolus angularis (Azuki bean).